The sequence spans 1287 residues: Vacuolating cytotoxin autotransporter (1287 aa).

The signal sequence occupies residues 1 to 33 (MEIQQTHRKINRPLVSLALVGALVSITPQQSHA). The disordered stretch occupies residues 326 to 381 (PPEGGYKDKPNNTPSQSGAKNDKQESSQNNSNTQVINPPNSTQKTEVQPTQVIDGP). Positions 351 to 376 (SSQNNSNTQVINPPNSTQKTEVQPTQ) are enriched in polar residues. The region spanning 1014 to 1287 (KYEKPTNVWA…ASNLGMRYSF (274 aa)) is the Autotransporter domain.

It is found in the periplasm. The protein resides in the secreted. Its subcellular location is the cell surface. It localises to the cell outer membrane. Induces vacuolation of eukaryotic cells. Causes ulceration and gastric lesions. In Helicobacter pylori (Campylobacter pylori), this protein is Vacuolating cytotoxin autotransporter (vacA).